The following is a 120-amino-acid chain: Late histone H2A.2.2 (120 aa).

Basic residues predominate over residues 1–18 (MSGRGKGAKSKSKAKSRS). The segment at 1 to 22 (MSGRGKGAKSKSKAKSRSSRAG) is disordered. Residue serine 2 is modified to N-acetylserine. The residue at position 2 (serine 2) is a Phosphoserine. Position 104 is an N5-methylglutamine (glutamine 104). A Glycyl lysine isopeptide (Lys-Gly) (interchain with G-Cter in ubiquitin) cross-link involves residue lysine 119.

This sequence belongs to the histone H2A family. In terms of assembly, the nucleosome is a histone octamer containing two molecules each of H2A, H2B, H3 and H4 assembled in one H3-H4 heterotetramer and two H2A-H2B heterodimers. The octamer wraps approximately 147 bp of DNA. In terms of processing, monoubiquitination of Lys-119 gives a specific tag for epigenetic transcriptional repression. Post-translationally, phosphorylation of Ser-2 directly represses transcription.

It is found in the nucleus. Its subcellular location is the chromosome. In terms of biological role, core component of nucleosome. Nucleosomes wrap and compact DNA into chromatin, limiting DNA accessibility to the cellular machineries which require DNA as a template. Histones thereby play a central role in transcription regulation, DNA repair, DNA replication and chromosomal stability. DNA accessibility is regulated via a complex set of post-translational modifications of histones, also called histone code, and nucleosome remodeling. This chain is Late histone H2A.2.2, found in Psammechinus miliaris (Green sea urchin).